The following is a 269-amino-acid chain: Energy-coupling factor transporter ATP-binding protein EcfA1 (269 aa).

Residues 8-242 form the ABC transporter domain; that stretch reads IVFKNVSFQY…AEELTRIGLD (235 aa). 42–49 contributes to the ATP binding site; the sequence is GHNGSGKS.

It belongs to the ABC transporter superfamily. Energy-coupling factor EcfA family. Forms a stable energy-coupling factor (ECF) transporter complex composed of 2 membrane-embedded substrate-binding proteins (S component), 2 ATP-binding proteins (A component) and 2 transmembrane proteins (T component).

The protein localises to the cell membrane. Functionally, ATP-binding (A) component of a common energy-coupling factor (ECF) ABC-transporter complex. Unlike classic ABC transporters this ECF transporter provides the energy necessary to transport a number of different substrates. This chain is Energy-coupling factor transporter ATP-binding protein EcfA1, found in Staphylococcus aureus (strain USA300).